A 371-amino-acid chain; its full sequence is Putative glutamate--cysteine ligase 2 (371 aa).

It belongs to the glutamate--cysteine ligase type 2 family. YbdK subfamily. In terms of assembly, homodimer.

The enzyme catalyses L-cysteine + L-glutamate + ATP = gamma-L-glutamyl-L-cysteine + ADP + phosphate + H(+). Its function is as follows. ATP-dependent carboxylate-amine ligase which exhibits weak glutamate--cysteine ligase activity. This chain is Putative glutamate--cysteine ligase 2, found in Cronobacter sakazakii (strain ATCC BAA-894) (Enterobacter sakazakii).